A 284-amino-acid polypeptide reads, in one-letter code: RNase adapter protein RapZ (284 aa).

8–15 (GRSGSGKS) is an ATP binding site. Residue 56–59 (DVRN) coordinates GTP. Positions 266–284 (RARGKNVQSRHRTLEKRKQ) are RNA-binding.

The protein belongs to the RapZ-like family. RapZ subfamily. As to quaternary structure, homotrimer.

Its function is as follows. Modulates the synthesis of GlmS, by affecting the processing and stability of the regulatory small RNA GlmZ. When glucosamine-6-phosphate (GlcN6P) concentrations are high in the cell, RapZ binds GlmZ and targets it to cleavage by RNase E. Consequently, GlmZ is inactivated and unable to activate GlmS synthesis. Under low GlcN6P concentrations, RapZ is sequestered and inactivated by an other regulatory small RNA, GlmY, preventing GlmZ degradation and leading to synthesis of GlmS. The chain is RNase adapter protein RapZ from Yersinia pseudotuberculosis serotype O:1b (strain IP 31758).